The chain runs to 121 residues: Acidic phospholipase A2 SpII RP4 (121 aa).

Disulfide bonds link C25-C114, C27-C43, C42-C94, C48-C121, C49-C87, C56-C80, and C74-C85. The Ca(2+) site is built by Y26, G28, and G30. The active site involves H46. D47 provides a ligand contact to Ca(2+). Residue D88 is part of the active site.

Ca(2+) serves as cofactor. Expressed by the venom gland.

Its subcellular location is the secreted. The enzyme catalyses a 1,2-diacyl-sn-glycero-3-phosphocholine + H2O = a 1-acyl-sn-glycero-3-phosphocholine + a fatty acid + H(+). In terms of biological role, snake venom phospholipase A2 (PLA2) which exhibits indirect hemolysis, induces mild edema inflammation in the foot pads of mice and slightly delays anticoagulant activities. In mice, not lethal, even at the highest dose, and exhibits low to moderate myotoxicity on muscular fibers. PLA2 catalyzes the calcium-dependent hydrolysis of the 2-acyl groups in 3-sn-phosphoglycerides. This Bothrops alternatus (Urutu) protein is Acidic phospholipase A2 SpII RP4.